Here is a 165-residue protein sequence, read N- to C-terminus: 3-isopropylmalate dehydratase small subunit (165 aa).

The protein belongs to the LeuD family. LeuD type 2 subfamily. In terms of assembly, heterodimer of LeuC and LeuD.

The enzyme catalyses (2R,3S)-3-isopropylmalate = (2S)-2-isopropylmalate. The protein operates within amino-acid biosynthesis; L-leucine biosynthesis; L-leucine from 3-methyl-2-oxobutanoate: step 2/4. Functionally, catalyzes the isomerization between 2-isopropylmalate and 3-isopropylmalate, via the formation of 2-isopropylmaleate. This chain is 3-isopropylmalate dehydratase small subunit, found in Hydrogenobaculum sp. (strain Y04AAS1).